The chain runs to 180 residues: NADH-quinone oxidoreductase subunit I (180 aa).

2 4Fe-4S ferredoxin-type domains span residues 50 to 80 and 90 to 119; these read LTRDPDGEERCVACNLCAVACPVGCISLQKA and EFFRINFSRCIFCGLCEEACPTTAIQLTPD. 8 residues coordinate [4Fe-4S] cluster: Cys-60, Cys-63, Cys-66, Cys-70, Cys-99, Cys-102, Cys-105, and Cys-109.

It belongs to the complex I 23 kDa subunit family. NDH-1 is composed of 13 different subunits. Subunits NuoA, H, J, K, L, M, N constitute the membrane sector of the complex. [4Fe-4S] cluster is required as a cofactor.

It localises to the cell inner membrane. The catalysed reaction is a quinone + NADH + 5 H(+)(in) = a quinol + NAD(+) + 4 H(+)(out). Its function is as follows. NDH-1 shuttles electrons from NADH, via FMN and iron-sulfur (Fe-S) centers, to quinones in the respiratory chain. The immediate electron acceptor for the enzyme in this species is believed to be ubiquinone. Couples the redox reaction to proton translocation (for every two electrons transferred, four hydrogen ions are translocated across the cytoplasmic membrane), and thus conserves the redox energy in a proton gradient. In Salmonella choleraesuis (strain SC-B67), this protein is NADH-quinone oxidoreductase subunit I.